A 519-amino-acid chain; its full sequence is GTPase Der (519 aa).

Acidic residues-rich tracts occupy residues 1–12 (MDVEGAFADEEE) and 30–54 (GYED…PDFG). The disordered stretch occupies residues 1–54 (MDVEGAFADEEELAPHGGWASADFDPAEFGYEDSDDDFDAEDFDETEFSNPDFG). EngA-type G domains are found at residues 81–244 (CTVA…PEEP) and 254–427 (RRVA…DNWD). GTP is bound by residues 87–94 (GRPNVGKS), 134–138 (DTGGW), 196–199 (NKFD), 260–267 (GKPNVGKS), 307–311 (DTAGL), and 372–375 (NKWD). The KH-like domain maps to 428 to 510 (RRISTGQLNT…PVRIAVRVRE (83 aa)).

The protein belongs to the TRAFAC class TrmE-Era-EngA-EngB-Septin-like GTPase superfamily. EngA (Der) GTPase family. In terms of assembly, associates with the 50S ribosomal subunit.

Its function is as follows. GTPase that plays an essential role in the late steps of ribosome biogenesis. This Corynebacterium glutamicum (strain ATCC 13032 / DSM 20300 / JCM 1318 / BCRC 11384 / CCUG 27702 / LMG 3730 / NBRC 12168 / NCIMB 10025 / NRRL B-2784 / 534) protein is GTPase Der.